The sequence spans 146 residues: Putative trafficking protein particle complex subunit TRS31 (146 aa).

Belongs to the TRAPP small subunits family. BET3 subfamily. As to quaternary structure, part of the multisubunit TRAPP (transport protein particle) complex.

The protein resides in the golgi apparatus. Its subcellular location is the cis-Golgi network. It is found in the endoplasmic reticulum. Its function is as follows. May play a role in vesicular transport from endoplasmic reticulum to Golgi. This is Putative trafficking protein particle complex subunit TRS31 (TRS31) from Encephalitozoon cuniculi (strain GB-M1) (Microsporidian parasite).